The following is a 1364-amino-acid chain: MTSSSSKSNKSRKSSKAAKDTTPVHESASRPLSKTPPPFRNHIVDKRGLKQLVAWAYKNHGTAVTSSMADKLKDLGFRYATQAAVSISVNDLQVPEAKKALLGEAEEQITATEERYRLGEITEVERHTKVIDTWTETNERLVDAVKKNFNQNAPLNSVWMMANSGARGNMSQVRQLVGMRGLMANPQGEIIDLPIRTNFREGLTVTEYVISSYGARKGLVDTALRTADSGYLTRRLVDVAQDVIVREDDCGTTRHIVVEAEDGRFGNRLVGRLTASQVVSAVGEVLAERDTEIDPPLSKRIEKAGVTAVSVRSPLTCEANRSVCRKCYGWALAHNELVDLGEAVGIIAAQSIGEPGTQLTMRTFHTGGVSTAETGVVRSVVAGTIEFSAKARVRPYRTPHGVNAQQAEVDFNLSIKPVGKGKTQKIEITNGSLLFVENGQTIDADVTVAQIAAGAVKKSVEKATKDVICDLAGQVRYEEAIQPREVTDRQGNITLKAQRLGRMWVLAGDVYNLPPNAQPVVQGDTEVTEGQVLAEASQRSEYGGDVRLRDSIGDSREVQIVTTAMTLKDFKLLEESTHSGEIWNLEAKDGTRYRLNTIPGSKIGSGEVVAELADDRFRTGTGGLVKFAPGLAIKKARSAKNGYEVNKGGTLLWIPQETHEINKDISLLMITDGQWIEAGTEVVKDIFSQTAGVVTVTQKNDILREIIVRSGDFHLSSDSKALERFEGDGHMVNPGEEIAKGLSIQDMKYVQTVETPEGKGLLLRPVEEYTIPNEAQLPELSHVKQANGPHLGIKATQRLAFKDNELIKSVEGVELLKTQLILETFDTTPQMTVDVEKAPDKRAKTISRLRLVILESILVRRDTMSDSSHGSTHTELQVEDGISVKAGDVIATTQILCKQAGVAQLPEATEADPVRRLLVERPEDTTTLSTSGKPVVAVGQRIVDGELLAEGDPSSCCGEVEAVDSNSVTLRLGRPYMVSPDSVLHVRDGDLVQRGDGLALLVFERQKTGDIVQGLPRIEELLEARRPRESAVLCKKPGTVEIKQGDDDESLTVTVIEADDAIGEYPILLGRNVMVSDGQQVTAGELLTDGPINPHELLECFFEDLRSRKPLMDAAQEAIANLQHRLVTEVQNVYKSQGVSIDDKHIEVIVRQMTSKVRVEDAGDTTLLPGELIELRQVEDTNQAMAITGGAPAEFTPVLLGITKASLNTDSFISAASFQETTRVLTEAAIEGKSDWLRGLKENVIIGRLIPAGTGFSGFEEELQKEAGPHPDILSEDPAGYRRMQNLRPDYTVEMPPAASSTAVLDDPSDADLEATRTRHNIDPSASNFAAFARPDADNELKEEQVVDAEAVEGLQEEGLLSDD.

Residues 1–42 (MTSSSSKSNKSRKSSKAAKDTTPVHESASRPLSKTPPPFRNH) are disordered. Residues C250, C317, C324, and C327 each contribute to the Zn(2+) site.

Belongs to the RNA polymerase beta' chain family. RpoC2 subfamily. In cyanobacteria the RNAP catalytic core is composed of 2 alpha, 1 beta, 1 beta', 1 gamma and 1 omega subunit. When a sigma factor is associated with the core the holoenzyme is formed, which can initiate transcription. Requires Zn(2+) as cofactor.

The enzyme catalyses RNA(n) + a ribonucleoside 5'-triphosphate = RNA(n+1) + diphosphate. Its function is as follows. DNA-dependent RNA polymerase catalyzes the transcription of DNA into RNA using the four ribonucleoside triphosphates as substrates. In Parasynechococcus marenigrum (strain WH8102), this protein is DNA-directed RNA polymerase subunit beta'.